The primary structure comprises 456 residues: MTKHYDYIAIGGGSGGIASLNRAASYGKKCAIIEAKHLGGTCVNVGCVPKKVMFYGAHIAEAINNYAPDYGFDVEVKKFDFSKLIESRQAYISRIHTSYNNVLAKNNIDVINGFGKFVDAHTIEVTLADGTKEQVTADHILIATGGRPYRPNIKGQEYGIDSDGFFALTELPKRAAVIGAGYIAVELSGVLNSLGVETHLLVRRHAPMRNQDPLIVETLVEVLAQDGIQLHTNSTPSEIVKNADGSLTVRCDGQSDVTVDCVIWAAGRVPTTDKIGLENAGVETNEHGYVKVDKYQNTNVKGIYAVGDIIENGIELTPVAVAAGRRLSERLFNNKPTEYLDYSLVPTVVFSHPPIGTVGLTEPQAIEQYGAENVKVYKSSFTAMYTAVTQHRQPCKMKLVCVGKDEKVVGLHGIGFGVDEMIQGFAVAIKMGATKADFDNTVAIHPTGSEEFVTMR.

Residues serine 14, glycine 15, glutamate 34, threonine 41, cysteine 42, and lysine 50 each coordinate FAD. A glutathione-binding site is contributed by serine 14. Cysteine 42 and cysteine 47 are oxidised to a cystine. Tyrosine 99 lines the glutathione pocket. Glycine 115 serves as a coordination point for FAD. NADP(+) contacts are provided by alanine 180, isoleucine 183, glutamate 186, arginine 203, arginine 209, and glycine 267. Aspartate 308 provides a ligand contact to FAD. Glutamate 315 provides a ligand contact to NADP(+). Threonine 317 provides a ligand contact to FAD. Residue arginine 325 participates in glutathione binding. NADP(+) is bound at residue valine 348. An FAD-binding site is contributed by histidine 445. Histidine 445 functions as the Proton acceptor in the catalytic mechanism.

This sequence belongs to the class-I pyridine nucleotide-disulfide oxidoreductase family. As to quaternary structure, homodimer. FAD is required as a cofactor.

Its subcellular location is the cytoplasm. The enzyme catalyses 2 glutathione + NADP(+) = glutathione disulfide + NADPH + H(+). Its function is as follows. Catalyzes the reduction of glutathione disulfide (GSSG) to reduced glutathione (GSH). Constitutes the major mechanism to maintain a high GSH:GSSG ratio in the cytosol. The chain is Glutathione reductase (gor) from Haemophilus influenzae (strain ATCC 51907 / DSM 11121 / KW20 / Rd).